Here is a 273-residue protein sequence, read N- to C-terminus: Formamidopyrimidine-DNA glycosylase (273 aa).

Catalysis depends on proline 2, which acts as the Schiff-base intermediate with DNA. Glutamate 3 acts as the Proton donor in catalysis. Catalysis depends on lysine 58, which acts as the Proton donor; for beta-elimination activity. DNA is bound by residues histidine 92, arginine 111, and arginine 153. An FPG-type zinc finger spans residues 238–272; that stretch reads RVYGREGQKCFNCSSTILKTKNSGRSTFYCKTCQY. Arginine 262 functions as the Proton donor; for delta-elimination activity in the catalytic mechanism.

This sequence belongs to the FPG family. In terms of assembly, monomer. The cofactor is Zn(2+).

It catalyses the reaction Hydrolysis of DNA containing ring-opened 7-methylguanine residues, releasing 2,6-diamino-4-hydroxy-5-(N-methyl)formamidopyrimidine.. It carries out the reaction 2'-deoxyribonucleotide-(2'-deoxyribose 5'-phosphate)-2'-deoxyribonucleotide-DNA = a 3'-end 2'-deoxyribonucleotide-(2,3-dehydro-2,3-deoxyribose 5'-phosphate)-DNA + a 5'-end 5'-phospho-2'-deoxyribonucleoside-DNA + H(+). Functionally, involved in base excision repair of DNA damaged by oxidation or by mutagenic agents. Acts as a DNA glycosylase that recognizes and removes damaged bases. Has a preference for oxidized purines, such as 7,8-dihydro-8-oxoguanine (8-oxoG). Has AP (apurinic/apyrimidinic) lyase activity and introduces nicks in the DNA strand. Cleaves the DNA backbone by beta-delta elimination to generate a single-strand break at the site of the removed base with both 3'- and 5'-phosphates. This chain is Formamidopyrimidine-DNA glycosylase, found in Rickettsia canadensis (strain McKiel).